We begin with the raw amino-acid sequence, 181 residues long: Endoglucanase (181 aa).

An intrachain disulfide couples Cys4 to Cys16. Asp24 functions as the Nucleophile in the catalytic mechanism. 5 cysteine pairs are disulfide-bonded: Cys30-Cys69, Cys32-Cys176, Cys65-Cys178, Cys72-Cys157, and Cys103-Cys113. Asp132 acts as the Proton donor in catalysis.

In terms of tissue distribution, digestive gland.

It catalyses the reaction Endohydrolysis of (1-&gt;4)-beta-D-glucosidic linkages in cellulose, lichenin and cereal beta-D-glucans.. Active towards the soluble carboxymethylcellulose (CMC). Possesses expansin activity too. The sequence is that of Endoglucanase from Mytilus edulis (Blue mussel).